Consider the following 738-residue polypeptide: Coiled-coil domain-containing protein 142 (738 aa).

Residues 1-34 (MARASSSSGPLPPLANVPSSWAQPVGAGEERDEG) are disordered. Residues 69–92 (ALQRLRATLLRLHREREQLLRARD) are a coiled coil. The segment at 682–704 (LSTLGGGGRGGGGGGGPGPSPEA) is disordered. The segment covering 685–698 (LGGGGRGGGGGGGP) has biased composition (gly residues).

The chain is Coiled-coil domain-containing protein 142 (Ccdc142) from Mus musculus (Mouse).